Here is a 1101-residue protein sequence, read N- to C-terminus: MDECGSRIRRRVSLPKRNRPSLGCIFGAPTAAELVPGDEGKEEEEMVAENRRRKTAGVLPVEVQPLLLSDSPECLVLGGGDTNPDLLRHMPTDRGVGDQPNDSEVDMFGDYDSFTENSFIAQVDDLEQKYMQLPEHKKHATDFATENLCSESIKNKLSITTIGNLTELQTDKHTENQSGYEGVTIEPGADLLYDVPSSQAIYFENLQNSSNDLGDHSMKERDWKSSSHNTVNEELPHNCIEQPQQNDESSSKVRTSSDMNRRKSIKDHLKNAMTGNAKAQTPIFSRSKQLKDTLLSEEINVAKKTVESSSNDLGPFYSLPSKVRDLYAQFKGIEKLYEWQHTCLTLNSVQERKNLIYSLPTSGGKTLVAEILMLQELLCCRKDVLMILPYVAIVQEKISGLSSFGIELGFFVEEYAGSKGRFPPTKRREKKSLYIATIEKGHSLVNSLIETGRIDSLGLVVVDELHMIGEGSRGATLEMTLAKILYTSKTTQIIGMSATLNNVEDLQKFLQAEYYTSQFRPVELKEYLKINDTIYEVDSKAENGMTFSRLLNYKYSDTLKKMDPDHLVALVTEVIPNYSCLVFCPSKKNCENVAEMICKFLSKEYLKHKEKEKCEVIKNLKNIGNGNLCPVLKRTIPFGVAYHHSGLTSDERKLLEEAYSTGVLCLFTCTSTLAAGVNLPARRVILRAPYVAKEFLKRNQYKQMIGRAGRAGIDTIGESILILQEKDKQQVLELITKPLENCYSHLVQEFTKGIQTLFLSLIGLKIATNLDDIYHFMNGTFFGVQQKVLLKEKSLWEITVESLRYLTEKGLLQKDTIYKSEEEVQYNFHITKLGRASFKGTIDLAYCDILYRDLKKGLEGLVLESLLHLIYLTTPYDLVSQCNPDWMIYFRQFSQLSPAEQNVAAILGVSESFIGKKASGQAIGKKVDKNVVNRLYLSFVLYTLLKETNIWTVSEKFNMPRGYIQNLLTGTASFSSCVLHFCEELEEFWVYRALLVELTKKLTYCVKAELIPLMEVTGVLEGRAKQLYSAGYKSLMHLANANPEVLVRTIDHLSRRQAKQIVSSAKMLLHEKAEALQEEVEELLRLPSDFPGAVASSTDKA.

The disordered stretch occupies residues 212–261 (DLGDHSMKERDWKSSSHNTVNEELPHNCIEQPQQNDESSSKVRTSSDMNR). The segment covering 213–225 (LGDHSMKERDWKS) has biased composition (basic and acidic residues). The span at 241 to 258 (EQPQQNDESSSKVRTSSD) shows a compositional bias: polar residues. Residues 346–518 (LNSVQERKNL…FLQAEYYTSQ (173 aa)) form the Helicase ATP-binding domain. ATP is bound at residue 359–366 (LPTSGGKT). The short motif at 463 to 466 (DELH) is the DEAH box element. Positions 566–758 (HLVALVTEVI…EFTKGIQTLF (193 aa)) constitute a Helicase C-terminal domain.

This sequence belongs to the helicase family. SKI2 subfamily. In terms of assembly, homodimer. Interacts with POLN. Interacts with RAD51B and RAD51C; promoting association with the BCDX2 complex. Interacts with the replication protein A (RPA/RP-A) complex. Interacts with RAD51; stimulating HELQ DNA helicase activity and ability to unwing DNA.

Its subcellular location is the nucleus. It is found in the chromosome. It catalyses the reaction Couples ATP hydrolysis with the unwinding of duplex DNA by translocating in the 3'-5' direction.. It carries out the reaction ATP + H2O = ADP + phosphate + H(+). ATPase activity is strongly stimulated by single-stranded DNA. Presence of ATP and Mg cofactor are required for helicase activity allowing to unwind duplex oligonucleotides up to 60-70-mer. This helicase activity is stimulated by replication protein A (RPA/RP-A) complex that binds to unwound regions and inhibits re-annealing. Single-stranded 3'-5' DNA helicase that plays a key role in homology-driven double-strand break (DSB) repair. Involved in different DSB repair mechanisms that are guided by annealing of extensive stretches of complementary bases at break ends, such as microhomology-mediated end-joining (MMEJ), single-strand annealing (SSA) or synthesis-dependent strand annealing (SDSA). Possesses both DNA unwinding and annealing activities. Forms a complex with RAD51, stimulating HELQ DNA helicase activity and ability to unwing DNA. Efficiently unwinds substrates containing 3' overhangs or a D-loop. In contrast, interaction with the replication protein A (RPA/RP-A) complex inhibits DNA unwinding by HELQ but strongly stimulates DNA strand annealing. Triggers displacement of RPA from single-stranded DNA to facilitate annealing of complementary sequences. The sequence is that of Helicase POLQ-like from Homo sapiens (Human).